A 151-amino-acid polypeptide reads, in one-letter code: MGRMHAPGKGISKSALPYRRSVPSWLKLSAEDVKEQIKKLGKKGMTPSQIGIILRDSHGVAQVRFVNGNKVLRIMKAVGLKPDIPEDLYFLIKKAVSIRKHLERNRKDIDSKFRLILIESRIHRLARYYKIKAVLPPNWKYESSTASALVA.

It belongs to the universal ribosomal protein uS15 family.

This is Small ribosomal subunit protein uS15 (RpS13) from Anopheles gambiae (African malaria mosquito).